The sequence spans 211 residues: Peptide methionine sulfoxide reductase MsrA (211 aa).

Residue Cys-52 is part of the active site.

This sequence belongs to the MsrA Met sulfoxide reductase family.

The catalysed reaction is L-methionyl-[protein] + [thioredoxin]-disulfide + H2O = L-methionyl-(S)-S-oxide-[protein] + [thioredoxin]-dithiol. It carries out the reaction [thioredoxin]-disulfide + L-methionine + H2O = L-methionine (S)-S-oxide + [thioredoxin]-dithiol. Its function is as follows. Has an important function as a repair enzyme for proteins that have been inactivated by oxidation. Catalyzes the reversible oxidation-reduction of methionine sulfoxide in proteins to methionine. The chain is Peptide methionine sulfoxide reductase MsrA from Klebsiella pneumoniae (strain 342).